A 159-amino-acid polypeptide reads, in one-letter code: MQSKEDFIEMRVPASAEYVSLIRLTLSGVFSRAGATYDDIEDAKIAVSEAVTNAVKHAYKENNNVGIINIYFEILEDKIKIVISDKGDSFDYETTKSKIGPYDKDENIDFLREGGLGLFLIESLMDEVTVYKEPGVTISMTKYIKKEQVRNNGERVEIS.

It belongs to the anti-sigma-factor family.

It catalyses the reaction L-seryl-[protein] + ATP = O-phospho-L-seryl-[protein] + ADP + H(+). It carries out the reaction L-threonyl-[protein] + ATP = O-phospho-L-threonyl-[protein] + ADP + H(+). Its function is as follows. Negative regulator of sigma-B activity. Phosphorylates and inactivates its specific antagonist protein, RsbV. Upon phosphorylation of RsbV, RsbW is released and binds to sigma-B, thereby blocking its ability to form an RNA polymerase holoenzyme (E-sigma-B). This is Serine-protein kinase RsbW from Staphylococcus aureus.